The following is a 106-amino-acid chain: Thiosulfate sulfurtransferase GlpE (106 aa).

In terms of domain architecture, Rhodanese spans serine 17 to alanine 105. The active-site Cysteine persulfide intermediate is cysteine 65.

It belongs to the GlpE family.

It localises to the cytoplasm. The catalysed reaction is thiosulfate + hydrogen cyanide = thiocyanate + sulfite + 2 H(+). It catalyses the reaction thiosulfate + [thioredoxin]-dithiol = [thioredoxin]-disulfide + hydrogen sulfide + sulfite + 2 H(+). Functionally, transferase that catalyzes the transfer of sulfur from thiosulfate to thiophilic acceptors such as cyanide or dithiols. May function in a CysM-independent thiosulfate assimilation pathway by catalyzing the conversion of thiosulfate to sulfite, which can then be used for L-cysteine biosynthesis. The polypeptide is Thiosulfate sulfurtransferase GlpE (Vibrio vulnificus (strain CMCP6)).